Consider the following 259-residue polypeptide: BTB/POZ domain-containing protein KCTD4 (259 aa).

Residues 1–25 (MERKINRREKEKEYEGKHNSLEDTD) are disordered. Residues 33–134 (TLMTLNVGGY…EVKSRWEKEQ (102 aa)) form the BTB domain.

This Homo sapiens (Human) protein is BTB/POZ domain-containing protein KCTD4 (KCTD4).